The sequence spans 470 residues: Putative dipeptidase TSTA_079200 (470 aa).

Residues 40-60 traverse the membrane as a helical segment; the sequence is AWLFGLGTLGIILASVLLNPF. Zn(2+)-binding residues include H92 and D94. A disulfide bridge links C143 with C237. A glycan (N-linked (GlcNAc...) asparagine) is linked at N188. E208 serves as a coordination point for Zn(2+). H235 contacts substrate. 2 residues coordinate Zn(2+): H279 and H300. Residues R311 and D371 each coordinate substrate.

Belongs to the metallo-dependent hydrolases superfamily. Peptidase M19 family. Requires Zn(2+) as cofactor.

It localises to the membrane. It catalyses the reaction an L-aminoacyl-L-amino acid + H2O = 2 an L-alpha-amino acid. In terms of biological role, hydrolyzes a wide range of dipeptides. The chain is Putative dipeptidase TSTA_079200 from Talaromyces stipitatus (strain ATCC 10500 / CBS 375.48 / QM 6759 / NRRL 1006) (Penicillium stipitatum).